A 610-amino-acid chain; its full sequence is F-box/LRR-repeat protein 4 (610 aa).

Positions 5-52 (DRINNCLPEELILEIFRRLESKPNRDACSLVCKRWLSLERFSRTTLRI) constitute an F-box domain. LRR repeat units lie at residues 53-79 (GASFSPDDFISLLSRRFLYITSIHVDE), 124-149 (SSSLTDTGLTALANGFPRIENLSLIW), 150-175 (CPNVSSVGLCSLAQKCTSLKSLDLQG), 178-200 (VGDQGLAAVGKFCKQLEELNLRF), 201-227 (CEGLTDVGVIDLVVGCSKSLKSIGVAA), 228-253 (SAKITDLSLEAVGSHCKLLEVLYLDS), 256-277 (IHDKGLIAVAQGCHRLKNLKLQ), 278-303 (CVSVTDVAFAAVGELCTSLERLALYS), 304-329 (FQHFTDKGMRAIGKGSKKLKDLTLSD), 330-355 (CYFVSCKGLEAIAHGCKELERVEING), 356-381 (CHNIGTRGIEAIGKSCPRLKELALLY), 382-407 (CQRIGNSALQEIGKGCKSLEILHLVD), 408-433 (CSGIGDIAMCSIAKGCRNLKKLHIRR), 434-459 (CYEIGNKGIISIGKHCKSLTELSLRF), 460-484 (CDKVGNKALIAIGKGCSLQQLNVSG), 485-510 (CNQISDAGITAIARGCPQLTHLDISV), 511-536 (LQNIGDMPLAELGEGCPMLKDLVLSH), 537-562 (CHHITDNGLNHLVQKCKLLETCHMVY), and 563-588 (CPGITSAGVATVVSSCPHIKKVLIEK). The segment at 88-125 (LSPSPKRKRGRDSSSPSSSKRKKLTDKTHSGAENVESS) is disordered.

The sequence is that of F-box/LRR-repeat protein 4 (FBL4) from Arabidopsis thaliana (Mouse-ear cress).